The sequence spans 770 residues: 1,4-alpha-glucan branching enzyme GlgB (770 aa).

D433 serves as the catalytic Nucleophile. E486 functions as the Proton donor in the catalytic mechanism.

The protein belongs to the glycosyl hydrolase 13 family. GlgB subfamily. Monomer.

The enzyme catalyses Transfers a segment of a (1-&gt;4)-alpha-D-glucan chain to a primary hydroxy group in a similar glucan chain.. It functions in the pathway glycan biosynthesis; glycogen biosynthesis. Functionally, catalyzes the formation of the alpha-1,6-glucosidic linkages in glycogen by scission of a 1,4-alpha-linked oligosaccharide from growing alpha-1,4-glucan chains and the subsequent attachment of the oligosaccharide to the alpha-1,6 position. The polypeptide is 1,4-alpha-glucan branching enzyme GlgB (glgB) (Synechocystis sp. (strain ATCC 27184 / PCC 6803 / Kazusa)).